The chain runs to 503 residues: MFGDRQRPMVLVLGLGESGLAIARWCARHGCRLRIADTREAPPNLAALQAEGIDAEFVGGAFTPALLDGGVEIVGLSPGLSPLEPALAALVAAANERGVAVWGELEFFAQALRALGTSGYQPKVLAITGTNGKTTTTSLTGLLCQRSGKKVAVAGNISPAMLDRLASAIDETALPDVWVLELSSFQLETARTFAPDAAAILNITQDHLDWHGSFDAYAQAKGRIFGATTTRVLNRDDAAVMKFAPAVAAADAPRTVTFGLNEPTQDGDYGLSRDNGIAWLVEAVDRDAPDEATTTRRRKRDAAHTPDIAQKRLMPADALRIRGLHNAANALAAFALARAIDLPAAPLLHALREYRGEAHRVEVIATIDDVDYVDDSKGTNVGATVAALDGLAQKIVLIAGGDGKGQDFAPLVAPVARWCRAVMLIGRDAPVIRDTLAETGVPLADHATLEAAVHAAAELAEPGDAVLLSPACASLDMFRNYAHRAEVFRAAVDAIAIDKGATP.

Position 129-135 (129-135 (GTNGKTT)) interacts with ATP.

Belongs to the MurCDEF family.

It localises to the cytoplasm. The enzyme catalyses UDP-N-acetyl-alpha-D-muramoyl-L-alanine + D-glutamate + ATP = UDP-N-acetyl-alpha-D-muramoyl-L-alanyl-D-glutamate + ADP + phosphate + H(+). Its pathway is cell wall biogenesis; peptidoglycan biosynthesis. Its function is as follows. Cell wall formation. Catalyzes the addition of glutamate to the nucleotide precursor UDP-N-acetylmuramoyl-L-alanine (UMA). This chain is UDP-N-acetylmuramoylalanine--D-glutamate ligase, found in Burkholderia cenocepacia (strain HI2424).